Consider the following 201-residue polypeptide: Adenylyl-sulfate kinase (201 aa).

ATP is bound at residue 35 to 42 (GLSGSGKS). Serine 109 functions as the Phosphoserine intermediate in the catalytic mechanism.

This sequence belongs to the APS kinase family.

The enzyme catalyses adenosine 5'-phosphosulfate + ATP = 3'-phosphoadenylyl sulfate + ADP + H(+). The protein operates within sulfur metabolism; hydrogen sulfide biosynthesis; sulfite from sulfate: step 2/3. Catalyzes the synthesis of activated sulfate. The chain is Adenylyl-sulfate kinase from Shigella flexneri.